We begin with the raw amino-acid sequence, 63 residues long: Conotoxin TxMRCL-D012 (63 aa).

Residues 1 to 19 form the signal peptide; sequence MRCLPVFVILLLLIASTPS. A propeptide spanning residues 20-47 is cleaved from the precursor; that stretch reads DTVPLKTKDDMPQASFHGNARRTLQMLS. Q50 bears the Pyrrolidone carboxylic acid mark.

It belongs to the conotoxin T superfamily. In terms of processing, contains 2 disulfide bonds that can be either 'C1-C3, C2-C4' or 'C1-C4, C2-C3', since these disulfide connectivities have been observed for conotoxins with cysteine framework V (for examples, see AC P0DQQ7 and AC P81755). Expressed by the venom duct.

It is found in the secreted. The sequence is that of Conotoxin TxMRCL-D012 from Conus textile (Cloth-of-gold cone).